A 267-amino-acid chain; its full sequence is Putative glycosyltransferase 63 (267 aa).

It belongs to the glycosyltransferase group 1 family. Glycosyltransferase 4 subfamily.

In Sulfolobus islandicus filamentous virus (isolate Iceland/Hveragerdi) (SIFV), this protein is Putative glycosyltransferase 63 (SIFV0063).